Here is a 581-residue protein sequence, read N- to C-terminus: MSKDLDKEDILYKKRHSIAHVMAEAVLDLFPNTKIAIGPPIKDGFYYDFEFKKQITEDSLLDIENRMREILKTGSSFEKEIISVEQALEIFKDEPYKIDLIKNFDLQNEVSIYKSHNFVDLCRGPHVENMNKIDPKAFKLTSIAGAYWRGSEKNPMLTRIYGTLWNNEKELRSYLNLREEIKKRDHRKLGKELDLFSIHEEIGPGLVFFHPNGAKIRALIEDFWREEHSKNGYDILFTPHIGKSWLWQTSGHLDFYKDSMFEKIEMDKSDYYLKPMNCPFHIAIYNTGKHSYRDLPFRWAELGTVYRYEKIGALHGMMRARGFTQDDAHIICTHSQVLDEIKEVLRFAIYMWSKFGFSNPKAYLSTKPDKSVGNDSDWEMSLKVLEETLSDFEVPYEIDKGGGAFYGPKIDLKIVDSLEREWQMSTIQFDFNLPERFNMTYTAEDGKEKRPFMIHRALLGSIERFFGILVEHYGGAFPLWLSPVQVVIIPVNNIVEDYAIKVFNKFKNEGIRIKLDNSSSRMNAKIREYQAKKIPYMFIIGEREATEERISIRTRTNEQINGMKLDEALKFILFKIRDKEI.

Positions 185 to 478 (DHRKLGKELD…LVEHYGGAFP (294 aa)) are catalytic. Residues cysteine 278, histidine 329, and histidine 455 each coordinate Zn(2+).

Belongs to the class-II aminoacyl-tRNA synthetase family. In terms of assembly, homodimer. Zn(2+) serves as cofactor.

The protein localises to the cytoplasm. It carries out the reaction tRNA(Thr) + L-threonine + ATP = L-threonyl-tRNA(Thr) + AMP + diphosphate + H(+). In terms of biological role, catalyzes the attachment of threonine to tRNA(Thr) in a two-step reaction: L-threonine is first activated by ATP to form Thr-AMP and then transferred to the acceptor end of tRNA(Thr). Also edits incorrectly charged L-seryl-tRNA(Thr). The protein is Threonine--tRNA ligase of Borreliella burgdorferi (strain ATCC 35210 / DSM 4680 / CIP 102532 / B31) (Borrelia burgdorferi).